The sequence spans 91 residues: PqqA binding protein (91 aa).

The protein belongs to the PqqD family. As to quaternary structure, monomer. Interacts with PqqE.

The protein operates within cofactor biosynthesis; pyrroloquinoline quinone biosynthesis. In terms of biological role, functions as a PqqA binding protein and presents PqqA to PqqE, in the pyrroloquinoline quinone (PQQ) biosynthetic pathway. The sequence is that of PqqA binding protein from Pseudomonas putida (strain W619).